The chain runs to 345 residues: Anthranilate phosphoribosyltransferase (345 aa).

5-phospho-alpha-D-ribose 1-diphosphate is bound by residues G84, 87–88 (GD), T92, 94–97 (NIST), 112–120 (KHGGRSVSS), and S124. Anthranilate is bound at residue G84. S96 serves as a coordination point for Mg(2+). R170 is an anthranilate binding site. The Mg(2+) site is built by D229 and E230.

Belongs to the anthranilate phosphoribosyltransferase family. Homodimer. Mg(2+) serves as cofactor.

The catalysed reaction is N-(5-phospho-beta-D-ribosyl)anthranilate + diphosphate = 5-phospho-alpha-D-ribose 1-diphosphate + anthranilate. Its pathway is amino-acid biosynthesis; L-tryptophan biosynthesis; L-tryptophan from chorismate: step 2/5. In terms of biological role, catalyzes the transfer of the phosphoribosyl group of 5-phosphorylribose-1-pyrophosphate (PRPP) to anthranilate to yield N-(5'-phosphoribosyl)-anthranilate (PRA). This Herminiimonas arsenicoxydans protein is Anthranilate phosphoribosyltransferase.